Reading from the N-terminus, the 2028-residue chain is Transient receptor potential cation channel subfamily M member 6 (2028 aa).

The Cytoplasmic segment spans residues 1-747 (MQVKKSWIEG…MWMGRLKMRK (747 aa)). Residues 577–601 (QPYKSKEKPEDSQKSKKKSKERQSL) form a disordered region. Basic and acidic residues predominate over residues 580 to 590 (KSKEKPEDSQK). The chain crosses the membrane as a helical span at residues 748–768 (NSWLKIIISILLPPMILTLEF). The Extracellular portion of the chain corresponds to 769–847 (KSKAEMSHVP…YEFYSAPFVK (79 aa)). Residues 848–868 (FWFYTMAYLAFLMLFTYTVLV) form a helical membrane-spanning segment. At 869 to 910 (EMQPQPSVHEWLVIIYIFTNAIEKVREICISEPSKFKQKVKM) the chain is on the cytoplasmic side. The helical transmembrane segment at 911-931 (WLSEYWNLMETVAIGLFAVGF) threads the bilayer. Residues 932 to 945 (GLRWGHPPLQTAGR) lie on the Extracellular side of the membrane. The chain crosses the membrane as a helical span at residues 946–966 (LIYCIDIIFWFSRLMDFFAVN). The Cytoplasmic portion of the chain corresponds to 967–978 (QHAGPYVTMIAK). Residues 979-999 (MAANMFYIVIIMAIVLLSFGV) traverse the membrane as a helical segment. The Extracellular segment spans residues 1000-1018 (ARKAILSPKEPPSWRLARD). An intramembrane region (pore-forming) is located at residues 1019-1039 (IVFEPYWMMYGEVYASDIDVC). At 1040–1053 (SNETSCPPGSFLTP) the chain is on the extracellular side. A helical membrane pass occupies residues 1054–1074 (FLQAVYLFVQYIIMVNLLIAC). Topologically, residues 1075-2028 (FNNIYLDIKS…RSSLEDHTRL (954 aa)) are cytoplasmic. Composition is skewed to basic and acidic residues over residues 1313–1323 (KREASHVREEQ) and 1665–1677 (DHLR…RDKT). 2 disordered regions span residues 1313 to 1339 (KREA…GISH) and 1658 to 1694 (RHTT…FLTR). Residues 1682–1694 (SGSTSLSRSFLTR) are compositionally biased toward low complexity. T1730 carries the phosphothreonine; by autocatalysis modification. One can recognise an Alpha-type protein kinase domain in the interval 1756-1986 (TLDKSMSSWS…CCGKLRLPDL (231 aa)). ADP-binding residues include G1783, G1784, L1785, R1786, and K1810. T1857 is modified (phosphothreonine; by autocatalysis). ADP is bound by residues E1882 and M1885. Position 1915 (H1915) interacts with Zn(2+). D1929 functions as the Proton acceptor in the catalytic mechanism. An ADP-binding site is contributed by D1939. Residues H1972, C1974, and C1978 each contribute to the Zn(2+) site. The interval 2009 to 2028 (TEELPERDKNRSSLEDHTRL) is disordered. A compositionally biased stretch (basic and acidic residues) spans 2012–2028 (LPERDKNRSSLEDHTRL).

This sequence in the C-terminal section; belongs to the protein kinase superfamily. Alpha-type protein kinase family. ALPK subfamily. The protein in the N-terminal section; belongs to the transient receptor (TC 1.A.4) family. LTrpC subfamily. TRPM6 sub-subfamily. Forms heteromers with TRPM7; TRPM6 increases the current amplitude of TRPM6/7 heteromers as compared to TRPM7 homomers. Interacts (via kinase domain) with RACK1. Post-translationally, autophosphorylated; autophosphorylation controls the protein kinase activity of TRPM6 towards their substrates. Autophosphorylation of Thr-1857 in the kinase domain is essential for the inhibitory effect of RACK1. In terms of processing, the C-terminus of TRPM6 is proteolytically cleaved in vivo, in a cell type-specific fashion, releasing the kinase module from the transmembrane domain. The cleaved kinase fragments are translocated to the nucleus to phosphorylate histones and regulate gene expression.

It localises to the cell membrane. The protein localises to the apical cell membrane. The protein resides in the nucleus. It carries out the reaction L-seryl-[protein] + ATP = O-phospho-L-seryl-[protein] + ADP + H(+). It catalyses the reaction L-threonyl-[protein] + ATP = O-phospho-L-threonyl-[protein] + ADP + H(+). The enzyme catalyses Mg(2+)(in) = Mg(2+)(out). The catalysed reaction is Ca(2+)(in) = Ca(2+)(out). It carries out the reaction Zn(2+)(in) = Zn(2+)(out). Its activity is regulated as follows. Strongly inhibited by intracellular Mg(2+); unlikely to be active at physiological levels of intracellular Mg(2+). In the heteromeric TRPM6-TRPM7 channels complexes, TRPM7 are able to offset the very high sensitivity of TRPM6 to cytosolic Mg(2+) to physiologically relevant concentrations, whereas TRPM6 relieve TRPM7 from the inhibitory action of Mg-ATP. Consequently, the association of TRPM6 with TRPM7 allow for high constitutive activity of TRPM6/7 in the presence of physiological levels of Mg(2+) and Mg-ATP. The kinase activity is controlled through the autophosphorylation of a serine/threonine-rich region located to the N-terminal of the catalytic domain. In terms of biological role, bifunctional protein that combines an ion channel with an intrinsic kinase domain, enabling it to modulate cellular functions either by conducting ions through the pore or by phosphorylating downstream proteins via its kinase domain. Crucial for Mg(2+) homeostasis. Has an important role in epithelial magnesium transport and in the active Mg(2+) absorption in the gut and kidney. However, whether TRPM6 forms functional homomeric channels by itself or functions primarily as a subunit of heteromeric TRPM6-TRPM7 channels, is still under debate. The C-terminal kinase domain can be cleaved from the channel segment in a cell-type-specific fashion. The cleaved kinase fragments can translocate to the nucleus, and bind chromatin-remodeling complex proteins to ultimately phosphorylate specific Ser/Thr residues of histones known to be functionally important for cell differentiation and development. This is Transient receptor potential cation channel subfamily M member 6 (Trpm6) from Mus musculus (Mouse).